The primary structure comprises 147 residues: Spermidine export protein MdtJ (147 aa).

Helical transmembrane passes span 1 to 21 (MIYW…TLSM), 31 to 51 (TGHI…SLAV), 54 to 74 (VALG…ITIF), and 81 to 101 (ETLS…ILLV). Residues 105-147 (TRKPKQPNCHRGNRPPSVQELKTQTTGHHKGVAVESGEHHAAA) are disordered.

This sequence belongs to the drug/metabolite transporter (DMT) superfamily. Small multidrug resistance (SMR) (TC 2.A.7.1) family. MdtJ subfamily. As to quaternary structure, forms a complex with MdtI.

The protein localises to the cell inner membrane. Catalyzes the excretion of spermidine. The chain is Spermidine export protein MdtJ from Yersinia pestis bv. Antiqua (strain Antiqua).